The sequence spans 349 residues: tRNA pseudouridine synthase D (349 aa).

Substrate is bound at residue phenylalanine 27. Aspartate 80 serves as the catalytic Nucleophile. Asparagine 129 serves as a coordination point for substrate. A TRUD domain is found at 155 to 303 (GVPNYFGAQR…VEAARRAMLL (149 aa)). Residue phenylalanine 329 participates in substrate binding.

The protein belongs to the pseudouridine synthase TruD family.

The enzyme catalyses uridine(13) in tRNA = pseudouridine(13) in tRNA. Responsible for synthesis of pseudouridine from uracil-13 in transfer RNAs. The protein is tRNA pseudouridine synthase D of Shigella boydii serotype 4 (strain Sb227).